Here is a 140-residue protein sequence, read N- to C-terminus: Trafficking protein particle complex subunit 2-like protein (140 aa).

The protein belongs to the TRAPP small subunits family. Sedlin subfamily.

The polypeptide is Trafficking protein particle complex subunit 2-like protein (trappc2l) (Dictyostelium discoideum (Social amoeba)).